The sequence spans 281 residues: Nucleoid occlusion protein (281 aa).

A disordered region spans residues 1–24; the sequence is MKHPFSRLFSFGEKEQEEMEEKQE. A DNA-binding region (H-T-H motif) is located at residues 145–164; the sequence is EALAQRLGKGQSTIANKLRL.

This sequence belongs to the ParB family.

It localises to the cytoplasm. The protein localises to the nucleoid. Its function is as follows. Effects nucleoid occlusion by binding relatively nonspecifically to DNA and preventing the assembly of the division machinery in the vicinity of the nucleoid, especially under conditions that disturb the cell cycle. It helps to coordinate cell division and chromosome segregation by preventing the formation of the Z ring through the nucleoid, which would cause chromosome breakage. The polypeptide is Nucleoid occlusion protein (Geobacillus kaustophilus (strain HTA426)).